The chain runs to 210 residues: Protein VNG_2543C (210 aa).

The region spanning 12–206 (EDGARTVELA…ETGDEDDPVE (195 aa)) is the AMMECR1 domain.

The polypeptide is Protein VNG_2543C (Halobacterium salinarum (strain ATCC 700922 / JCM 11081 / NRC-1) (Halobacterium halobium)).